The sequence spans 210 residues: Large ribosomal subunit protein uL4 (210 aa).

The segment at 46–77 is disordered; it reads QGTHKSKERGEIAGSTKKIKKQKGTGTARAGS.

The protein belongs to the universal ribosomal protein uL4 family. In terms of assembly, part of the 50S ribosomal subunit.

Its function is as follows. One of the primary rRNA binding proteins, this protein initially binds near the 5'-end of the 23S rRNA. It is important during the early stages of 50S assembly. It makes multiple contacts with different domains of the 23S rRNA in the assembled 50S subunit and ribosome. In terms of biological role, forms part of the polypeptide exit tunnel. The chain is Large ribosomal subunit protein uL4 from Amoebophilus asiaticus (strain 5a2).